The primary structure comprises 252 residues: Orotidine 5'-phosphate decarboxylase (252 aa).

Substrate is bound by residues D26, K48, 75 to 84 (DLKFHDIPNT), T135, R196, Q205, G225, and R226. The active-site Proton donor is the K77.

This sequence belongs to the OMP decarboxylase family. Type 1 subfamily. Homodimer.

The enzyme catalyses orotidine 5'-phosphate + H(+) = UMP + CO2. The protein operates within pyrimidine metabolism; UMP biosynthesis via de novo pathway; UMP from orotate: step 2/2. Catalyzes the decarboxylation of orotidine 5'-monophosphate (OMP) to uridine 5'-monophosphate (UMP). This chain is Orotidine 5'-phosphate decarboxylase, found in Sodalis glossinidius (strain morsitans).